The sequence spans 337 residues: Quercetin 2,3-dioxygenase (337 aa).

Cupin type-2 domains are found at residues 55-110 (KGDA…MQSH) and 226-281 (PKGD…RLDS). Positions 62, 64, 69, 103, 234, 236, 241, and 275 each coordinate Fe cation.

As to quaternary structure, homodimer. It depends on Fe(2+) as a cofactor.

The catalysed reaction is quercetin + O2 = 2-(3,4-dihydroxybenzoyloxy)-4,6-dihydroxybenzoate + CO. The protein operates within flavonoid metabolism; quercetin degradation. In terms of biological role, performs the first step in the degradation of the flavonoid quercetin by a dioxygenase reaction. The enzyme catalyzes the cleavage of the O-heteroaromatic ring of the flavonol quercetin yielding the depside 2-protocatechuoyl-phloroglucinol carboxylic acid and carbon monoxide. This involves the remarkable dioxygenolytic cleavage of two carbon-carbon bonds. The chain is Quercetin 2,3-dioxygenase (qdoI) from Bacillus subtilis (strain 168).